Reading from the N-terminus, the 556-residue chain is Polyphenol oxidase 2 (556 aa).

6 residues coordinate Cu cation: histidine 57, histidine 81, histidine 90, histidine 250, histidine 254, and histidine 282. Residues 79-81 constitute a cross-link (2'-(S-cysteinyl)-histidine (Cys-His)); it reads CTH. Histidine 254 contacts substrate. A propeptide spans 379–556 (removed in mature form); the sequence is SKPSSGARNT…FDDVAVHVIN (178 aa).

The protein belongs to the tyrosinase family. As to quaternary structure, heterotetramer. Cu(2+) is required as a cofactor. Post-translationally, the C-ter is probably cleaved after Gly-378 since the mature active protein is smaller than the protein encoded by the gene.

The enzyme catalyses 2 L-dopa + O2 = 2 L-dopaquinone + 2 H2O. It catalyses the reaction L-tyrosine + O2 = L-dopaquinone + H2O. Its function is as follows. Copper-containing oxidase that catalyzes both the o-hydroxylation of monophenols and the subsequent oxidation of the resulting o-diphenols into reactive o-quinones, which evolve spontaneously to produce intermediates, which associate in dark brown pigments. Involved in the initial step of melanin synthesis. Melanins constitute a mechanism of defense and resistance to stress such as UV radiations, free radicals, gamma rays, dehydratation and extreme temperatures, and contribute to the fungal cell-wall resistance against hydrolytic enzymes in avoiding cellular lysis. Fungal pigments are also involved in the formation and stability of spores. This Agaricus bisporus (White button mushroom) protein is Polyphenol oxidase 2 (PPO2).